The primary structure comprises 260 residues: Pyridoxine 5'-phosphate synthase (260 aa).

Asparagine 7 and arginine 18 together coordinate 3-amino-2-oxopropyl phosphate. Catalysis depends on histidine 43, which acts as the Proton acceptor. 1-deoxy-D-xylulose 5-phosphate contacts are provided by arginine 45 and histidine 50. Glutamate 83 (proton acceptor) is an active-site residue. Residue threonine 113 participates in 1-deoxy-D-xylulose 5-phosphate binding. The active-site Proton donor is histidine 208. 3-amino-2-oxopropyl phosphate contacts are provided by residues aspartate 209 and glycine 230–histidine 231.

It belongs to the PNP synthase family. As to quaternary structure, homooctamer; tetramer of dimers.

It is found in the cytoplasm. It carries out the reaction 3-amino-2-oxopropyl phosphate + 1-deoxy-D-xylulose 5-phosphate = pyridoxine 5'-phosphate + phosphate + 2 H2O + H(+). Its pathway is cofactor biosynthesis; pyridoxine 5'-phosphate biosynthesis; pyridoxine 5'-phosphate from D-erythrose 4-phosphate: step 5/5. Functionally, catalyzes the complicated ring closure reaction between the two acyclic compounds 1-deoxy-D-xylulose-5-phosphate (DXP) and 3-amino-2-oxopropyl phosphate (1-amino-acetone-3-phosphate or AAP) to form pyridoxine 5'-phosphate (PNP) and inorganic phosphate. In Leptospira biflexa serovar Patoc (strain Patoc 1 / Ames), this protein is Pyridoxine 5'-phosphate synthase.